Consider the following 226-residue polypeptide: NAD(P)H-hydrate epimerase (226 aa).

The YjeF N-terminal domain occupies 10-215 (AIELDLDLFE…ALQRKYQLNL (206 aa)). Residue 58–62 (NNGGD) coordinates (6S)-NADPHX. The K(+) site is built by Asn59 and Asp123. (6S)-NADPHX is bound by residues 127 to 133 (GFGFKPP) and Asp156. Ser159 contacts K(+).

Belongs to the NnrE/AIBP family. The cofactor is K(+).

It carries out the reaction (6R)-NADHX = (6S)-NADHX. The enzyme catalyses (6R)-NADPHX = (6S)-NADPHX. In terms of biological role, catalyzes the epimerization of the S- and R-forms of NAD(P)HX, a damaged form of NAD(P)H that is a result of enzymatic or heat-dependent hydration. This is a prerequisite for the S-specific NAD(P)H-hydrate dehydratase to allow the repair of both epimers of NAD(P)HX. The chain is NAD(P)H-hydrate epimerase from Drosophila persimilis (Fruit fly).